Here is a 1343-residue protein sequence, read N- to C-terminus: DNA-directed RNA polymerase subunit beta (1343 aa).

This sequence belongs to the RNA polymerase beta chain family. The RNAP catalytic core consists of 2 alpha, 1 beta, 1 beta' and 1 omega subunit. When a sigma factor is associated with the core the holoenzyme is formed, which can initiate transcription.

The enzyme catalyses RNA(n) + a ribonucleoside 5'-triphosphate = RNA(n+1) + diphosphate. In terms of biological role, DNA-dependent RNA polymerase catalyzes the transcription of DNA into RNA using the four ribonucleoside triphosphates as substrates. The polypeptide is DNA-directed RNA polymerase subunit beta (Shewanella sediminis (strain HAW-EB3)).